We begin with the raw amino-acid sequence, 659 residues long: Interferon-induced GTP-binding protein Mx1 (659 aa).

At Met-1 the chain carries N-acetylmethionine. The segment at 1-40 (MVNSKGEITDSDPGSNHLLLNGLPDKAGKNQDTEPENSLC) is disordered. Residues 65–338 (DLALPAIAVI…LITHICKTLP (274 aa)) enclose the Dynamin-type G domain. Residues 75 to 82 (GDQSSGKS) are G1 motif. 75–82 (GDQSSGKS) contributes to the GTP binding site. A G2 motif region spans residues 100–102 (VTR). The G3 motif stretch occupies residues 176-179 (DLPG). Residues 176 to 180 (DLPGI) and 245 to 248 (TKPD) contribute to the GTP site. Positions 245–248 (TKPD) are G4 motif. Residues 277–280 (KCRG) form a G5 motif region. Positions 339 to 364 (LLENQIKENHEKITEELKKYGSDVPE) are bundle signaling element (BSE). The tract at residues 364–531 (EEEHEKMFFL…HFQMEQIVYC (168 aa)) is middle domain. The stalk stretch occupies residues 365–629 (EEHEKMFFLI…KDTYNWLLKE (265 aa)). The tract at residues 552–555 (KNKK) is critical for lipid-binding. Residues 571-659 (LSEIFEHLLA…ARRRLAKFPG (89 aa)) form the GED domain.

This sequence belongs to the TRAFAC class dynamin-like GTPase superfamily. Dynamin/Fzo/YdjA family. In terms of assembly, homooligomer. Oligomerizes into multimeric filamentous or ring-like structures by virtue of its stalk domain. Oligomerization is critical for GTPase activity, protein stability, and recognition of viral target structures. Interacts with TRPC1, TRPC3, TRPC4, TRPC5, TRPC6 and TRPC7. Interacts with HSPA5. Interacts with TUBB/TUBB5. Interacts with DDX39A and DDX39B. In terms of processing, ISGylated.

It is found in the cytoplasm. The protein localises to the endoplasmic reticulum membrane. It localises to the perinuclear region. Its function is as follows. Interferon-induced dynamin-like GTPase with antiviral activity. The polypeptide is Interferon-induced GTP-binding protein Mx1 (MX1) (Phoca vitulina (Harbor seal)).